A 688-amino-acid chain; its full sequence is MDFITINSSNKTEEFALKQVAKQATSSLLYRLGKTIILASVCVEREPVSEDFLPLVVQFLEKSYAAGKIPGGFVKREGRAQDFEILTSRLIDRTLRPLFPKDYRYPTQITLMVLSHDIENDLQVSALNAASAALFLAHIAPIKSVSACRIARMDNEFIINPSASLLNQSSLDLFVSGTKESLNMIEMRSLGQKLNALEEPLMLEALELAQKSLEETCTLYEEIFTPHQNELFFKESQGIVFNERLLDLLKNQYFDEIIKGIESSALSERENVFNEIARKISEAHSEFSLEEIELSLEKVKKTEIRRMIIKDKIRPDKRALEEVRPILIESDLLPMAHSSILFTRGQTQSLVVGVLGTDNDAQTHESLEHKAPIKERFMFHYNFPPFCVGEASSIGAASRRELGHGNLAKRALETSIKNKEQVIRLVSEILESNGSSSMASVCAGSLALYASGVEIYDLVAGVAMGMVSEGQDHAILSDISGLEDAEGDMDFKIAGNLEGITAMQMDTKMSGIKLEILYQALLQAKEARKHILKIMHEAKEKIVINFSHLPTTEIFNVAPDKIVEIIGQGGRVIKEIVEKFEVKIDLNKPSGEVKIMGNKERVLKTKEFILNYLHSLDQELEQYAIDEVLEAQVKRIVDFGAFLSLPKGGEGLLRKQNMDKCQVVLKEGDSIRCRVISFNKGKIALDLA.

Residues Asp484 and Asp490 each coordinate Mg(2+). Residues 550–609 (PTTEIFNVAPDKIVEIIGQGGRVIKEIVEKFEVKIDLNKPSGEVKIMGNKERVLKTKEFI) enclose the KH domain. The S1 motif domain occupies 626–688 (DEVLEAQVKR…NKGKIALDLA (63 aa)).

It belongs to the polyribonucleotide nucleotidyltransferase family. It depends on Mg(2+) as a cofactor.

The protein resides in the cytoplasm. The enzyme catalyses RNA(n+1) + phosphate = RNA(n) + a ribonucleoside 5'-diphosphate. Its function is as follows. Involved in mRNA degradation. Catalyzes the phosphorolysis of single-stranded polyribonucleotides processively in the 3'- to 5'-direction. The chain is Polyribonucleotide nucleotidyltransferase from Helicobacter pylori (strain ATCC 700392 / 26695) (Campylobacter pylori).